The following is a 373-amino-acid chain: MVAELTALRDQIDEVDKALLNLLAKRLELVAEVGEVKSRFGLPIYVPEREASMLASRRAEAEALGVPPDLIEDVLRRVMRESYSSENDKGFKTLCPSLRPVVIVGGGGQMGRLFEKMLTLSGYQVRILEQHDWDRAADIVADAGMVIVSVPIHVTEQVIGKLPPLPKDCILVDLASVKNGPLQAMLVAHDGPVLGLHPMFGPDSGSLAKQVVVWCDGRKPEAYQWFLEQIQVWGARLHRISAVEHDQNMAFIQALRHFATFAYGLHLAEENVQLEQLLALSSPIYRLELAMVGRLFAQDPQLYADIIMSSERNLALIKRYYKRFGEAIELLEQGDKQAFIDSFRKVEHWFGDYAQRFQSESRVLLRQANDNRQ.

A Chorismate mutase domain is found at 1-90 (MVAELTALRD…ESYSSENDKG (90 aa)). Residues 99–361 (RPVVIVGGGG…DYAQRFQSES (263 aa)) form the Prephenate/arogenate dehydrogenase domain.

This sequence in the C-terminal section; belongs to the prephenate/arogenate dehydrogenase family.

The protein localises to the cytoplasm. It catalyses the reaction chorismate = prephenate. It carries out the reaction prephenate + NAD(+) = 3-(4-hydroxyphenyl)pyruvate + CO2 + NADH. It participates in amino-acid biosynthesis; L-tyrosine biosynthesis; (4-hydroxyphenyl)pyruvate from prephenate (NAD(+) route): step 1/1. It functions in the pathway metabolic intermediate biosynthesis; prephenate biosynthesis; prephenate from chorismate: step 1/1. The polypeptide is T-protein (tyrA) (Escherichia coli (strain K12)).